The chain runs to 194 residues: ATP-dependent Clp protease proteolytic subunit (194 aa).

Ser-98 functions as the Nucleophile in the catalytic mechanism. The active site involves His-123.

The protein belongs to the peptidase S14 family. In terms of assembly, fourteen ClpP subunits assemble into 2 heptameric rings which stack back to back to give a disk-like structure with a central cavity, resembling the structure of eukaryotic proteasomes.

It is found in the cytoplasm. It catalyses the reaction Hydrolysis of proteins to small peptides in the presence of ATP and magnesium. alpha-casein is the usual test substrate. In the absence of ATP, only oligopeptides shorter than five residues are hydrolyzed (such as succinyl-Leu-Tyr-|-NHMec, and Leu-Tyr-Leu-|-Tyr-Trp, in which cleavage of the -Tyr-|-Leu- and -Tyr-|-Trp bonds also occurs).. Functionally, cleaves peptides in various proteins in a process that requires ATP hydrolysis. Has a chymotrypsin-like activity. Plays a major role in the degradation of misfolded proteins. This chain is ATP-dependent Clp protease proteolytic subunit, found in Staphylococcus carnosus (strain TM300).